The chain runs to 274 residues: Ribosomal RNA small subunit methyltransferase A (274 aa).

S-adenosyl-L-methionine-binding residues include histidine 15, leucine 17, glycine 42, glutamate 64, aspartate 89, and asparagine 108.

This sequence belongs to the class I-like SAM-binding methyltransferase superfamily. rRNA adenine N(6)-methyltransferase family. RsmA subfamily.

The protein localises to the cytoplasm. The enzyme catalyses adenosine(1518)/adenosine(1519) in 16S rRNA + 4 S-adenosyl-L-methionine = N(6)-dimethyladenosine(1518)/N(6)-dimethyladenosine(1519) in 16S rRNA + 4 S-adenosyl-L-homocysteine + 4 H(+). Functionally, specifically dimethylates two adjacent adenosines (A1518 and A1519) in the loop of a conserved hairpin near the 3'-end of 16S rRNA in the 30S particle. May play a critical role in biogenesis of 30S subunits. In Prochlorococcus marinus (strain MIT 9215), this protein is Ribosomal RNA small subunit methyltransferase A.